Consider the following 172-residue polypeptide: Signal peptidase complex catalytic subunit SEC11 (172 aa).

The Cytoplasmic segment spans residues 1-14 (MLSSLGNPRQAAAQ). Residues 15-35 (LMNFALILSTAFMMWKGLSVI) traverse the membrane as a helical; Signal-anchor for type II membrane protein segment. Over 36 to 172 (TDSPSPIVVV…MGLLVVLQRE (137 aa)) the chain is Lumenal. Residues Ser-49 and His-90 each act as charge relay system in the active site. Asn-111 is a glycosylation site (N-linked (GlcNAc...) asparagine). Asp-115 serves as the catalytic Charge relay system. The tract at residues 158–169 (VMLGIMGLLVVL) is C-terminal short (CTS) helix.

Belongs to the peptidase S26B family. As to quaternary structure, component of the signal peptidase complex (SPC) composed of a catalytic subunit SEC11 and three accessory subunits SPC1, SPC2 and SPC3. The complex induces a local thinning of the ER membrane which is used to measure the length of the signal peptide (SP) h-region of protein substrates. This ensures the selectivity of the complex towards h-regions shorter than 18-20 amino acids. SPC associates with the translocon complex.

The protein resides in the endoplasmic reticulum membrane. The catalysed reaction is Cleavage of hydrophobic, N-terminal signal or leader sequences from secreted and periplasmic proteins.. Its function is as follows. Catalytic component of the signal peptidase complex (SPC) which catalyzes the cleavage of N-terminal signal sequences from nascent proteins as they are translocated into the lumen of the endoplasmic reticulum. Specifically cleaves N-terminal signal peptides that contain a hydrophobic alpha-helix (h-region) shorter than 18-20 amino acids. This chain is Signal peptidase complex catalytic subunit SEC11 (SEC11), found in Fusarium vanettenii (strain ATCC MYA-4622 / CBS 123669 / FGSC 9596 / NRRL 45880 / 77-13-4) (Fusarium solani subsp. pisi).